A 431-amino-acid polypeptide reads, in one-letter code: Enolase (431 aa).

Position 167 (Gln-167) interacts with (2R)-2-phosphoglycerate. Residue Glu-209 is the Proton donor of the active site. Residues Asp-246, Glu-289, and Asp-316 each coordinate Mg(2+). Lys-341, Arg-370, Ser-371, and Lys-392 together coordinate (2R)-2-phosphoglycerate. The Proton acceptor role is filled by Lys-341.

It belongs to the enolase family. Component of the RNA degradosome, a multiprotein complex involved in RNA processing and mRNA degradation. It depends on Mg(2+) as a cofactor.

The protein localises to the cytoplasm. Its subcellular location is the secreted. It localises to the cell surface. The enzyme catalyses (2R)-2-phosphoglycerate = phosphoenolpyruvate + H2O. The protein operates within carbohydrate degradation; glycolysis; pyruvate from D-glyceraldehyde 3-phosphate: step 4/5. In terms of biological role, catalyzes the reversible conversion of 2-phosphoglycerate (2-PG) into phosphoenolpyruvate (PEP). It is essential for the degradation of carbohydrates via glycolysis. The polypeptide is Enolase (Shewanella denitrificans (strain OS217 / ATCC BAA-1090 / DSM 15013)).